A 945-amino-acid chain; its full sequence is Leucine--tRNA ligase (945 aa).

Residues 43-53 (PYPNGAIHIGH) carry the 'HIGH' region motif. Residues 638–642 (KMSKS) carry the 'KMSKS' region motif. Lysine 641 provides a ligand contact to ATP.

This sequence belongs to the class-I aminoacyl-tRNA synthetase family.

It localises to the cytoplasm. The catalysed reaction is tRNA(Leu) + L-leucine + ATP = L-leucyl-tRNA(Leu) + AMP + diphosphate. This Pyrobaculum aerophilum (strain ATCC 51768 / DSM 7523 / JCM 9630 / CIP 104966 / NBRC 100827 / IM2) protein is Leucine--tRNA ligase.